Reading from the N-terminus, the 129-residue chain is Replication initiation control protein YabA (129 aa).

Residues His103, Cys105, Cys119, and Cys122 each coordinate Zn(2+).

Belongs to the YabA family. As to quaternary structure, homotetramer. Interacts with both DnaA and DnaN, acting as a bridge between these two proteins. Requires Zn(2+) as cofactor.

The protein localises to the cytoplasm. The protein resides in the nucleoid. Its function is as follows. Involved in control of chromosome replication initiation. Inhibits the cooperative binding of DnaA to the oriC region, thus negatively regulating initiation of chromosome replication. Inhibits the ability of DnaA-ATP to form a helix on DNA; does not disassemble preformed DnaA-DNA helices. Decreases the residence time of DnaA on the chromosome at its binding sites (oriC, replication forks and promoter-binding sites). Tethers DnaA to the replication machinery via the DNA polymerase beta sliding clamp subunit (dnaN). Associates with oriC and other DnaA targets on the chromosome in a DnaA-dependent manner. The sequence is that of Replication initiation control protein YabA from Listeria welshimeri serovar 6b (strain ATCC 35897 / DSM 20650 / CCUG 15529 / CIP 8149 / NCTC 11857 / SLCC 5334 / V8).